A 1185-amino-acid polypeptide reads, in one-letter code: 1-phosphatidylinositol 4,5-bisphosphate phosphodiesterase beta-2 (1185 aa).

The 152-residue stretch at 312-463 (HDMTQPLNHY…LRGKILIKNK (152 aa)) folds into the PI-PLC X-box domain. The active site involves H327. Residues N328, E357, and D359 each contribute to the Ca(2+) site. Residue H374 is part of the active site. Ca(2+) is bound at residue E408. Residues 460-533 (IKNKKNQFSG…EEIKKMQSDE (74 aa)) are disordered. Polar residues predominate over residues 465–476 (NQFSGPTSSSKD). The span at 501–524 (EGTELEEEEVEEEEEEESGNLDEE) shows a compositional bias: acidic residues. The region spanning 546–662 (MSSLVNYIQP…GYLLKHEFMR (117 aa)) is the PI-PLC Y-box domain. Residues 662–790 (RRPDKQFNPF…CLHSESNMPL (129 aa)) form the C2 domain. Disordered stretches follow at residues 859-888 (LAPTSNGSPAARAGAREEAMKEAAEPRTAS) and 943-979 (GACKLGPGKGSRKKRSLPREESAGAAPGEGPEGVDGR). Residues 872-888 (GAREEAMKEAAEPRTAS) are compositionally biased toward basic and acidic residues. S953 carries the phosphoserine modification. Positions 988-1147 (ELELLRQGEE…VKESVRACLR (160 aa)) form a coiled coil.

In terms of assembly, interacts with RAC1. Forms a complex composed of at least WDR26, a G-beta:gamma unit, and PLCB2. Ca(2+) is required as a cofactor.

The enzyme catalyses a 1,2-diacyl-sn-glycero-3-phospho-(1D-myo-inositol-4,5-bisphosphate) + H2O = 1D-myo-inositol 1,4,5-trisphosphate + a 1,2-diacyl-sn-glycerol + H(+). It catalyses the reaction a 1,2-diacyl-sn-glycero-3-phospho-(1D-myo-inositol) + H2O = 1D-myo-inositol 1-phosphate + a 1,2-diacyl-sn-glycerol + H(+). Its function is as follows. The production of the second messenger molecules diacylglycerol (DAG) and inositol 1,4,5-trisphosphate (IP3) is mediated by activated phosphatidylinositol-specific phospholipase C enzymes. In neutrophils, participates in a phospholipase C-activating N-formyl peptide-activated GPCR (G protein-coupled receptor) signaling pathway by promoting RASGRP4 activation by DAG, to promote neutrophil functional responses. This chain is 1-phosphatidylinositol 4,5-bisphosphate phosphodiesterase beta-2, found in Homo sapiens (Human).